The chain runs to 59 residues: UPF0434 protein HDEF_0234 (59 aa).

Belongs to the UPF0434 family.

The polypeptide is UPF0434 protein HDEF_0234 (Hamiltonella defensa subsp. Acyrthosiphon pisum (strain 5AT)).